The following is a 301-amino-acid chain: ATP synthase gamma chain (301 aa).

The protein belongs to the ATPase gamma chain family. As to quaternary structure, F-type ATPases have 2 components, CF(1) - the catalytic core - and CF(0) - the membrane proton channel. CF(1) has five subunits: alpha(3), beta(3), gamma(1), delta(1), epsilon(1). CF(0) has three main subunits: a, b and c.

The protein localises to the cell inner membrane. In terms of biological role, produces ATP from ADP in the presence of a proton gradient across the membrane. The gamma chain is believed to be important in regulating ATPase activity and the flow of protons through the CF(0) complex. This chain is ATP synthase gamma chain, found in Bordetella petrii (strain ATCC BAA-461 / DSM 12804 / CCUG 43448).